A 71-amino-acid chain; its full sequence is Small ribosomal subunit protein bS21 (71 aa).

The protein belongs to the bacterial ribosomal protein bS21 family.

The chain is Small ribosomal subunit protein bS21 from Buchnera aphidicola subsp. Baizongia pistaciae (strain Bp).